The primary structure comprises 789 residues: Aconitate hydratase, mitochondrial (789 aa).

The transit peptide at 1-32 (MFCKISRAPARMGSRIFTQSTLRSFSCAPVAA) directs the protein to the mitochondrion. Residues glutamine 106 and 199–201 (DSH) contribute to the substrate site. Positions 392, 455, and 458 each coordinate [4Fe-4S] cluster. Substrate is bound by residues arginine 481, arginine 486, arginine 613, and 676 to 677 (SR).

The protein belongs to the aconitase/IPM isomerase family. In terms of assembly, monomer. It depends on [4Fe-4S] cluster as a cofactor.

The protein resides in the mitochondrion. The enzyme catalyses citrate = D-threo-isocitrate. The protein operates within carbohydrate metabolism; tricarboxylic acid cycle; isocitrate from oxaloacetate: step 2/2. Functionally, catalyzes the isomerization of citrate to isocitrate via cis-aconitate, a step in the citric acid cycle. The polypeptide is Aconitate hydratase, mitochondrial (Schizosaccharomyces pombe (strain 972 / ATCC 24843) (Fission yeast)).